A 324-amino-acid chain; its full sequence is Deoxyhypusine hydroxylase (324 aa).

2 HEAT-like PBS-type repeats span residues Leu60–Asp86 and Arg94–Arg119. Residues His62, Glu63, His95, and Glu96 each coordinate Fe cation. Basic and acidic residues predominate over residues Glu143–Gln152. The tract at residues Glu143–Gln171 is disordered. HEAT-like PBS-type repeat units follow at residues Lys189 to Gly219, Phe227 to Asn253, and Val260 to Asp287. Positions 229, 230, 262, and 263 each coordinate Fe cation.

The protein belongs to the deoxyhypusine hydroxylase family. Fe(2+) is required as a cofactor.

It localises to the cytoplasm. The protein resides in the nucleus. The enzyme catalyses [eIF5A protein]-deoxyhypusine + AH2 + O2 = [eIF5A protein]-hypusine + A + H2O. It functions in the pathway protein modification; eIF5A hypusination. Catalyzes the hydroxylation of the N(6)-(4-aminobutyl)-L-lysine intermediate to form hypusine, an essential post-translational modification only found in mature eIF-5A factor. This is Deoxyhypusine hydroxylase (lia1) from Neurospora crassa (strain ATCC 24698 / 74-OR23-1A / CBS 708.71 / DSM 1257 / FGSC 987).